A 330-amino-acid chain; its full sequence is Aspartate--ammonia ligase (330 aa).

It belongs to the class-II aminoacyl-tRNA synthetase family. AsnA subfamily.

The protein localises to the cytoplasm. It catalyses the reaction L-aspartate + NH4(+) + ATP = L-asparagine + AMP + diphosphate + H(+). The protein operates within amino-acid biosynthesis; L-asparagine biosynthesis; L-asparagine from L-aspartate (ammonia route): step 1/1. The polypeptide is Aspartate--ammonia ligase (Glaesserella parasuis serovar 5 (strain SH0165) (Haemophilus parasuis)).